A 469-amino-acid chain; its full sequence is Ufm1-specific protease 2 (469 aa).

Met1 bears the N-acetylmethionine mark. Active-site residues include Cys302, Asp426, and His428.

It belongs to the peptidase C78 family.

The protein resides in the endoplasmic reticulum. The protein localises to the cytoplasm. It is found in the nucleus. Functionally, thiol-dependent isopeptidase that specifically cleaves UFM1, a ubiquitin-like modifier protein, from conjugated proteins, such as CD274/PD-L1, CYB5R3, DDRGK1, MRE11, RPL26/uL24, TRIP4 and RPL26/uL24. While it is also able to mediate the processing of UFM1 precursors, a prerequisite for conjugation reactions, UFSP2 mainly acts as a protein deUFMylase that mediates deconjugation of UFM1 from target proteins. Mediates deUFMylation of RPL26/uL24, a critical step to release the UFM1 ribosome E3 ligase (UREL) complex during the recycling of 60S ribosome subunits from the endoplasmic reticulum. Catalyzes deUFMylation of TRIP4, regulating intracellular nuclear receptors transactivation and thereby regulate cell proliferation and differentiation. The chain is Ufm1-specific protease 2 from Pongo abelii (Sumatran orangutan).